We begin with the raw amino-acid sequence, 116 residues long: NADPH-dependent 7-cyano-7-deazaguanine reductase (116 aa).

The active-site Thioimide intermediate is the cysteine 31. The Proton donor role is filled by aspartate 38. Substrate is bound by residues 53 to 55 (VEL) and 72 to 73 (YE).

It belongs to the GTP cyclohydrolase I family. QueF type 1 subfamily.

The protein localises to the cytoplasm. The catalysed reaction is 7-aminomethyl-7-carbaguanine + 2 NADP(+) = 7-cyano-7-deazaguanine + 2 NADPH + 3 H(+). It functions in the pathway tRNA modification; tRNA-queuosine biosynthesis. Its function is as follows. Catalyzes the NADPH-dependent reduction of 7-cyano-7-deazaguanine (preQ0) to 7-aminomethyl-7-deazaguanine (preQ1). In Chlorobium chlorochromatii (strain CaD3), this protein is NADPH-dependent 7-cyano-7-deazaguanine reductase.